A 120-amino-acid polypeptide reads, in one-letter code: Large ribosomal subunit protein uL18 (120 aa).

Belongs to the universal ribosomal protein uL18 family. As to quaternary structure, part of the 50S ribosomal subunit; part of the 5S rRNA/L5/L18/L25 subcomplex. Contacts the 5S and 23S rRNAs.

Its function is as follows. This is one of the proteins that bind and probably mediate the attachment of the 5S RNA into the large ribosomal subunit, where it forms part of the central protuberance. The protein is Large ribosomal subunit protein uL18 of Clostridium novyi (strain NT).